Consider the following 261-residue polypeptide: Vacuolar protein sorting-associated protein 37D (261 aa).

Residues 93-182 (AENCADKLQR…RRRERSAQPA (90 aa)) enclose the VPS37 C-terminal domain. A disordered region spans residues 172-261 (LRRRERSAQP…RPSQPEPPHR (90 aa)). Over residues 181–195 (PAPTTAAAAAAAATA) the composition is skewed to low complexity. 2 stretches are compositionally biased toward pro residues: residues 215–224 (GPPPAVPRSL) and 231–261 (PVPPVKGSPGCPFGPAPLLSPRPSQPEPPHR).

This sequence belongs to the VPS37 family. As to quaternary structure, component of the ESCRT-I complex (endosomal sorting complex required for transport I) which consists of TSG101, VPS28, a VPS37 protein (VPS37A to -D) and MVB12A or MVB12B in a 1:1:1:1 stoichiometry. Interacts with TSG101 and MVB12A. Component of the ESCRT-I complex (endosomal sorting complex required for transport I) which consists of TSG101, VPS28, a VPS37 protein (VPS37A to -D) and UBAP1 in a 1:1:1:1 stoichiometry.

It localises to the late endosome membrane. Component of the ESCRT-I complex, a regulator of vesicular trafficking process. Required for the sorting of endocytic ubiquitinated cargos into multivesicular bodies. May be involved in cell growth and differentiation. In Mus musculus (Mouse), this protein is Vacuolar protein sorting-associated protein 37D.